A 207-amino-acid polypeptide reads, in one-letter code: Probable molybdenum cofactor guanylyltransferase (207 aa).

Residues 9–11, Lys-21, and Asp-97 contribute to the GTP site; that span reads LAG. Asp-97 lines the Mg(2+) pocket.

This sequence belongs to the MobA family. It depends on Mg(2+) as a cofactor.

It is found in the cytoplasm. The enzyme catalyses Mo-molybdopterin + GTP + H(+) = Mo-molybdopterin guanine dinucleotide + diphosphate. In terms of biological role, transfers a GMP moiety from GTP to Mo-molybdopterin (Mo-MPT) cofactor (Moco or molybdenum cofactor) to form Mo-molybdopterin guanine dinucleotide (Mo-MGD) cofactor. The chain is Probable molybdenum cofactor guanylyltransferase from Trichormus variabilis (strain ATCC 29413 / PCC 7937) (Anabaena variabilis).